We begin with the raw amino-acid sequence, 551 residues long: Putative ABC transporter ATP-binding protein BT9727_3105 (551 aa).

2 ABC transporter domains span residues 5-243 (AEIN…FRPF) and 293-525 (LSAE…SINR). ATP is bound by residues 39 to 46 (GGSGSGKT) and 327 to 334 (GKNGTGKS).

It belongs to the ABC transporter superfamily.

It is found in the cell membrane. Its function is as follows. Probably part of an ABC transporter complex. Responsible for energy coupling to the transport system. The protein is Putative ABC transporter ATP-binding protein BT9727_3105 of Bacillus thuringiensis subsp. konkukian (strain 97-27).